We begin with the raw amino-acid sequence, 732 residues long: MSTPDNHGKKAPQFAAFKPLTTVQNANDCCCDGACSSTPTLSENVSGTRYSWKVSGMDCAACARKVENAVRQLAGVNQVQVLFATEKLVVDADNDIRAQVESALQKAGYSLRDEQAAEEPQASRLKENLPLITLIVMMAISWGLEQFNHPFGQLAFIATTLVGLYPIARQALRLIKSGSYFAIETLMSVAAIGALFIGATAEAAMVLLLFLIGERLEGWAASRARQGVSALMALKPETATRLRKGEREEVAINSLRPGDVIEVAAGGRLPADGKLLSPFASFDESALTGESIPVERATGDKVPAGATSVDRLVTLEVLSEPGASAIDRILKLIEEAEERRAPIERFIDRFSRIYTPAIMAVALLVTLVPPLLFAASWQEWIYKGLTLLLIGCPCALVISTPAAITSGLAAAARRGALIKGGAALEQLGRVTQVAFDKTGTLTVGKPRVTAIHPATGISESELLTLAAAVEQGATHPLAQAIVREAQVAELAIPTAESQRALVGSGIEAQVNGERVLICAAGKHPADAFTGLINELESAGQTVVLVVRNDDVLGVIALQDTLRADAATAISELNALGVKGVILTGDNPRAAAAIAGELGLEFKAGLLPEDKVKAVTELNQHAPLAMVGDGINDAPAMKAAAIGIAMGSGTDVALETADAALTHNHLRGLVQMIELARATHANIRQNITIALGLKGIFLVTTLLGMTGLWLAVLADTGATVLVTANALRLLRRR.

At methionine 1–arginine 124 the chain is on the cytoplasmic side. The HMA domain occupies threonine 48–arginine 112. Residues aspartate 58, cysteine 59, and cysteine 62 each contribute to the Zn(2+) site. Residues leucine 125–glutamate 145 form a helical membrane-spanning segment. A topological domain (periplasmic) is located at residue glutamine 146. The helical transmembrane segment at phenylalanine 147–isoleucine 167 threads the bilayer. Over alanine 168–serine 179 the chain is Cytoplasmic. A helical membrane pass occupies residues tyrosine 180–isoleucine 197. The Periplasmic segment spans residues glycine 198–glutamate 202. Residues alanine 203–serine 222 form a helical membrane-spanning segment. Residues arginine 223–proline 356 are Cytoplasmic-facing. The chain crosses the membrane as a helical span at residues alanine 357–tryptophan 377. Over glutamine 378–lysine 383 the chain is Periplasmic. The chain crosses the membrane as a helical span at residues glycine 384–isoleucine 404. Zn(2+) is bound by residues cysteine 392 and cysteine 394. At threonine 405–asparagine 685 the chain is on the cytoplasmic side. Aspartate 436 functions as the 4-aspartylphosphate intermediate in the catalytic mechanism. Mg(2+) is bound by residues aspartate 436, threonine 438, and aspartate 628. The helical transmembrane segment at isoleucine 686 to leucine 702 threads the bilayer. Topologically, residues glycine 703–leucine 707 are periplasmic. The helical transmembrane segment at tryptophan 708–leucine 729 threads the bilayer. Aspartate 714 lines the Zn(2+) pocket. At arginine 730–arginine 732 the chain is on the cytoplasmic side.

It belongs to the cation transport ATPase (P-type) (TC 3.A.3) family. Type IB subfamily.

It localises to the cell inner membrane. It catalyses the reaction Pb(2+)(in) + ATP + H2O = Pb(2+)(out) + ADP + phosphate + H(+). The catalysed reaction is Zn(2+)(in) + ATP + H2O = Zn(2+)(out) + ADP + phosphate + H(+). It carries out the reaction Cd(2+)(in) + ATP + H2O = Cd(2+)(out) + ADP + phosphate + H(+). With respect to regulation, inhibited by orthovanadate. Functionally, confers resistance to zinc, cadmium and lead. Couples the hydrolysis of ATP with the export of zinc, cadmium or lead, with highest activity when the metals are present as metal-thiolate complexes. Can also bind nickel, copper, cobalt and mercury. This chain is Zinc/cadmium/lead-transporting P-type ATPase, found in Escherichia coli (strain K12).